We begin with the raw amino-acid sequence, 480 residues long: MTSVQQPRTLAEKVWDSHVVVRGTGEGEAREPDLIYIDLHLVHEVTSPQAFDGLRLAGRQVRRPDLTIATEDHNVPTIDIDKPIADPVSRTQVETLRKNCEEFGIRLHPMGDAEQGIVHVVGPQLGLTQPGTTVVCGDSHTSTHGAFGALAMGIGTSEVEHVLATQTLPLRPFRTMAINIDGSLPTGVTSKDVILAVIAKIGTGGGQGYVLEYRGQAVEEMSMEARMTMCNMSIEAGARAGMVAPDETTYAYLKDRPHAPKGQLWDAAVAEWDSLRTDEGAQFDAEVHIDASTLTPFVTWGTNPGQGVPLGADVPDPELMADEEERLAAEKALTYMDLTPGTPMREIPVDTVFVGSCTNGRIEDLRAVADVLRDRKVAAGVTMLIVPGSMRVRAQAESEGLGEIFAAAGAQWRQAGCSMCLGMNPDQLSPGQRCASTSNRNFEGRQGKGGRTHLVSPAVAAATAVRGKLSSPADLAKSVK.

[4Fe-4S] cluster is bound by residues Cys-357, Cys-417, and Cys-420. Over residues 431–441 the composition is skewed to polar residues; sequence GQRCASTSNRN. Residues 431-454 form a disordered region; the sequence is GQRCASTSNRNFEGRQGKGGRTHL.

It belongs to the aconitase/IPM isomerase family. LeuC type 1 subfamily. As to quaternary structure, heterodimer of LeuC and LeuD. The cofactor is [4Fe-4S] cluster.

It carries out the reaction (2R,3S)-3-isopropylmalate = (2S)-2-isopropylmalate. The protein operates within amino-acid biosynthesis; L-leucine biosynthesis; L-leucine from 3-methyl-2-oxobutanoate: step 2/4. In terms of biological role, catalyzes the isomerization between 2-isopropylmalate and 3-isopropylmalate, via the formation of 2-isopropylmaleate. The polypeptide is 3-isopropylmalate dehydratase large subunit (Mycobacteroides abscessus (strain ATCC 19977 / DSM 44196 / CCUG 20993 / CIP 104536 / JCM 13569 / NCTC 13031 / TMC 1543 / L948) (Mycobacterium abscessus)).